The following is a 166-amino-acid chain: MALRLEDKKAIVAEVNEAAKGALSAVVADSRGVTVGAMTTLRKTARANGVYVRVVRNTLARRAVEGTAFECLNEVFTGPTLIAFSNEHPGAAARLLKDFAKEQAKFEVKGAAFEGNFIPAADIDRLAKLPTYEEALAQLMMTMKEASAGKFVRTLAALRDQKQEAA.

Belongs to the universal ribosomal protein uL10 family. In terms of assembly, part of the ribosomal stalk of the 50S ribosomal subunit. The N-terminus interacts with L11 and the large rRNA to form the base of the stalk. The C-terminus forms an elongated spine to which L12 dimers bind in a sequential fashion forming a multimeric L10(L12)X complex.

In terms of biological role, forms part of the ribosomal stalk, playing a central role in the interaction of the ribosome with GTP-bound translation factors. In Shewanella amazonensis (strain ATCC BAA-1098 / SB2B), this protein is Large ribosomal subunit protein uL10.